A 1544-amino-acid chain; its full sequence is Arf-GAP with Rho-GAP domain, ANK repeat and PH domain-containing protein 3 (1544 aa).

The region spanning 4–68 is the SAM domain; the sequence is PQDLDIAVWL…LRLLQTGTEE (65 aa). Disordered stretches follow at residues 64 to 147 and 167 to 194; these read TGTE…EQSS and GRAQ…PTTG. 2 stretches are compositionally biased toward pro residues: residues 82–97 and 130–139; these read SPSP…PVPK and EPSPRPPPLP. PH domains follow at residues 287–379 and 394–483; these read TPLL…SCLK and RPLR…EAVT. Positions 480–611 constitute an Arf-GAP domain; the sequence is EAVTETLSDY…LFRKPHPQYP (132 aa). A C4-type zinc finger spans residues 504–527; sequence CADCGSSRPDWAAVNLGVVICKQC. The 182-residue stretch at 907 to 1088 folds into the Rho-GAP domain; sequence TGLQEQQMSR…ELIDGYISVF (182 aa). In terms of domain architecture, Ras-associating spans 1117-1210; it reads GDLIMEVYIE…ASLLLKKVPL (94 aa). The 103-residue stretch at 1223 to 1325 folds into the PH 3 domain; it reads ESPRVGLLRC…WTTSILKAQH (103 aa). A Phosphothreonine modification is found at threonine 1348. Tyrosine 1403 and tyrosine 1408 each carry phosphotyrosine. Residues 1422–1544 are disordered; it reads STSFSTTREW…SSPPSSQPLT (123 aa). Polar residues predominate over residues 1438–1457; sequence PLTSQKSLDQPFLSKSSTLG. 2 positions are modified to phosphoserine: serine 1444 and serine 1480. Composition is skewed to low complexity over residues 1482–1492 and 1502–1527; these read EEQLLQELSSL and GLGS…TPGF.

Interacts (via SAM domain) with INPPL1/SHIP2. Tyrosine phosphorylated at a low basal level. PDGF treatment stimulates phosphorylation. Tyrosine phosphorylation is increased in cells that are in the process of becoming attached to a substrate and that start spreading and flattening.

Its subcellular location is the cytoplasm. It localises to the cytoskeleton. It is found in the cell membrane. The protein resides in the cell projection. The protein localises to the lamellipodium. Its subcellular location is the ruffle. Functionally, phosphatidylinositol 3,4,5-trisphosphate-dependent GTPase-activating protein that modulates actin cytoskeleton remodeling by regulating ARF and RHO family members. Is activated by phosphatidylinositol 3,4,5-trisphosphate (PtdIns(3,4,5)P3) binding. Can be activated by phosphatidylinositol 3,4-bisphosphate (PtdIns(3,4,5)P2) binding, albeit with lower efficiency. Acts on ARF6, RAC1, RHOA and CDC42. Plays a role in the internalization of anthrax toxin. This chain is Arf-GAP with Rho-GAP domain, ANK repeat and PH domain-containing protein 3 (ARAP3), found in Homo sapiens (Human).